Consider the following 335-residue polypeptide: 2-acylglycerol O-acyltransferase 2-A (335 aa).

Transmembrane regions (helical) follow at residues 24 to 44 (WVFS…VLLF) and 47 to 67 (FWII…TPSK).

It belongs to the diacylglycerol acyltransferase family.

Its subcellular location is the endoplasmic reticulum membrane. It is found in the cytoplasm. The protein localises to the perinuclear region. The enzyme catalyses a 2-acylglycerol + an acyl-CoA = a 1,2-diacylglycerol + CoA. It catalyses the reaction a 2-acylglycerol + an acyl-CoA = a 1,2-diacyl-sn-glycerol + CoA. The catalysed reaction is a 2-acylglycerol + an acyl-CoA = a 2,3-diacyl-sn-glycerol + CoA. It carries out the reaction a 1-acylglycerol + an acyl-CoA = a 1,2-diacylglycerol + CoA. The enzyme catalyses a 1-acylglycerol + an acyl-CoA = a 1,3-diacylglycerol + CoA. It catalyses the reaction 1-O-alkylglycerol + an acyl-CoA = 1-O-alkyl-3-acylglycerol + CoA. The catalysed reaction is an acyl-CoA + a 1,2-diacyl-sn-glycerol = a triacyl-sn-glycerol + CoA. Its pathway is glycerolipid metabolism; triacylglycerol biosynthesis. Its function is as follows. Catalyzes the formation of diacylglycerol from 2-monoacylglycerol and fatty acyl-CoA. In terms of biological role, involved in glycerolipid synthesis and lipid metabolism. Catalyzes the formation of diacylglycerol, the precursor of triacylglycerol, by transferring the acyl chain of a fatty acyl-CoA to a monoacylglycerol. Plays a central role in absorption of dietary fat in the small intestine by catalyzing the resynthesis of triacylglycerol in enterocytes. Has a preference toward monoacylglycerols containing unsaturated fatty acids in an order of C18:3 &gt; C18:2 &gt; C18:1 &gt; C18:0 at sn-2. Able to use 1-monoalkylglycerol (1-MAkG, 1-O-alkylglycerol) as an acyl acceptor for the synthesis of monoalkyl-monoacylglycerol (MAMAG, 1-O-alkyl-3-acylglycerol or 1-O-alkyl-2-acylglycerol) and subsequently, with lower efficiency, may add another acyl chain producing monoalkyl-diacylglycerol (MADAG, 1-O-alkyl-2,3-diacylglycerol). Possesses weak but significant activity with diacylglycerol as substrate, producing triacylglycerol (triacyl-sn-glycerol). This is 2-acylglycerol O-acyltransferase 2-A (mogat2-a) from Xenopus laevis (African clawed frog).